Reading from the N-terminus, the 251-residue chain is Triosephosphate isomerase (251 aa).

Substrate is bound at residue 9–11 (NWK). His-95 acts as the Electrophile in catalysis. Glu-167 functions as the Proton acceptor in the catalytic mechanism. Residues Gly-173, Ser-213, and 234–235 (GG) each bind substrate. At Ser-213 the chain carries Phosphoserine.

This sequence belongs to the triosephosphate isomerase family. As to quaternary structure, homodimer.

It is found in the cytoplasm. The enzyme catalyses D-glyceraldehyde 3-phosphate = dihydroxyacetone phosphate. Its pathway is carbohydrate biosynthesis; gluconeogenesis. It participates in carbohydrate degradation; glycolysis; D-glyceraldehyde 3-phosphate from glycerone phosphate: step 1/1. In terms of biological role, involved in the gluconeogenesis. Catalyzes stereospecifically the conversion of dihydroxyacetone phosphate (DHAP) to D-glyceraldehyde-3-phosphate (G3P). The chain is Triosephosphate isomerase from Bacillus cytotoxicus (strain DSM 22905 / CIP 110041 / 391-98 / NVH 391-98).